The following is a 200-amino-acid chain: Pre-mRNA cleavage factor Im 25 kDa subunit 2 (200 aa).

A Nudix hydrolase domain is found at 45–172 (GMRTSVEGIL…KLLAVPLFEL (128 aa)). The tract at residues 72–74 (TFC) is interaction with RNA. Positions 79-100 (GRLKPGENEADGLKRKLTSKLG) match the Nudix box motif.

This sequence belongs to the Nudix hydrolase family. CPSF5 subfamily. As to quaternary structure, homodimer. Component of the cleavage factor Im (CFIm) complex. Forms a complex with cleavage and polyadenylation specificity factor (CPSF) subunits FIPS5, PAPS4 and CPSF30.

The protein localises to the nucleus. Component of the cleavage factor Im (CFIm) complex that plays a key role in pre-mRNA 3'-processing. Involved in association with CPSF6 or CPSF7 in pre-MRNA 3'-end poly(A) site cleavage and poly(A) addition. NUDT21/CPSF5 binds to cleavage and polyadenylation RNA substrates. The homodimer mediates simultaneous sequence-specific recognition of two 5'-UGUA-3' elements within the pre-mRNA. Binds to, but does not hydrolyze mono- and di-adenosine nucleotides. May have a role in mRNA export. This is Pre-mRNA cleavage factor Im 25 kDa subunit 2 from Arabidopsis thaliana (Mouse-ear cress).